A 279-amino-acid chain; its full sequence is Protoheme IX farnesyltransferase (279 aa).

A run of 9 helical transmembrane segments spans residues 5-25 (LILL…AGYL), 33-53 (IAQA…AAAF), 84-103 (LAYS…LLLG), 108-125 (LFVF…TVIL), 133-153 (ILGG…LGAG), 159-179 (AVLI…ALAY), 201-221 (AAVA…MTLY), 222-242 (LAFG…VATI), and 256-276 (AMWK…LALI).

The protein belongs to the UbiA prenyltransferase family. Protoheme IX farnesyltransferase subfamily.

It localises to the cell membrane. The enzyme catalyses heme b + (2E,6E)-farnesyl diphosphate + H2O = Fe(II)-heme o + diphosphate. It participates in porphyrin-containing compound metabolism; heme O biosynthesis; heme O from protoheme: step 1/1. In terms of biological role, converts heme B (protoheme IX) to heme O by substitution of the vinyl group on carbon 2 of heme B porphyrin ring with a hydroxyethyl farnesyl side group. In Pyrobaculum arsenaticum (strain DSM 13514 / JCM 11321 / PZ6), this protein is Protoheme IX farnesyltransferase.